Here is a 159-residue protein sequence, read N- to C-terminus: Heavy metal-associated isoprenylated plant protein 28 (159 aa).

The region spanning 10-73 (LQTIEMRVHM…KVRKTGRRAE (64 aa)) is the HMA domain. Residues C21 and C24 each contribute to the a metal cation site. Position 156 is a cysteine methyl ester (C156). The S-farnesyl cysteine moiety is linked to residue C156. Residues 157-159 (SIM) constitute a propeptide, removed in mature form.

Belongs to the HIPP family.

Functionally, heavy-metal-binding protein. The sequence is that of Heavy metal-associated isoprenylated plant protein 28 from Arabidopsis thaliana (Mouse-ear cress).